The sequence spans 196 residues: Holliday junction branch migration complex subunit RuvA (196 aa).

The domain I stretch occupies residues Met-1–Leu-63. The domain II stretch occupies residues Asn-64–Ser-139. Ser-139 is a region of interest (flexible linker). Residues Ser-139–Asn-196 form a domain III region.

The protein belongs to the RuvA family. In terms of assembly, homotetramer. Forms an RuvA(8)-RuvB(12)-Holliday junction (HJ) complex. HJ DNA is sandwiched between 2 RuvA tetramers; dsDNA enters through RuvA and exits via RuvB. An RuvB hexamer assembles on each DNA strand where it exits the tetramer. Each RuvB hexamer is contacted by two RuvA subunits (via domain III) on 2 adjacent RuvB subunits; this complex drives branch migration. In the full resolvosome a probable DNA-RuvA(4)-RuvB(12)-RuvC(2) complex forms which resolves the HJ.

It is found in the cytoplasm. Functionally, the RuvA-RuvB-RuvC complex processes Holliday junction (HJ) DNA during genetic recombination and DNA repair, while the RuvA-RuvB complex plays an important role in the rescue of blocked DNA replication forks via replication fork reversal (RFR). RuvA specifically binds to HJ cruciform DNA, conferring on it an open structure. The RuvB hexamer acts as an ATP-dependent pump, pulling dsDNA into and through the RuvAB complex. HJ branch migration allows RuvC to scan DNA until it finds its consensus sequence, where it cleaves and resolves the cruciform DNA. The sequence is that of Holliday junction branch migration complex subunit RuvA from Borrelia garinii subsp. bavariensis (strain ATCC BAA-2496 / DSM 23469 / PBi) (Borreliella bavariensis).